Reading from the N-terminus, the 509-residue chain is Aromatase (509 aa).

Cys437 serves as a coordination point for heme.

The protein belongs to the cytochrome P450 family. Heme is required as a cofactor.

Its subcellular location is the membrane. It catalyses the reaction testosterone + 3 reduced [NADPH--hemoprotein reductase] + 3 O2 = 17beta-estradiol + formate + 3 oxidized [NADPH--hemoprotein reductase] + 4 H2O + 4 H(+). The enzyme catalyses androst-4-ene-3,17-dione + 3 reduced [NADPH--hemoprotein reductase] + 3 O2 = estrone + formate + 3 oxidized [NADPH--hemoprotein reductase] + 4 H2O + 4 H(+). Catalyzes the formation of aromatic C18 estrogens from C19 androgens. The protein is Aromatase (CYP19A1) of Taeniopygia guttata (Zebra finch).